Here is a 766-residue protein sequence, read N- to C-terminus: Flocculation suppression protein (766 aa).

Disordered stretches follow at residues 1–52 (MSEE…HGSK), 129–181 (HDHS…PTKI), 203–247 (KRRA…SSNS), 547–619 (KPVP…SISG), and 657–766 (SVTP…KVKM). Composition is skewed to low complexity over residues 8 to 19 (SAPAPASTPAPA) and 134 to 147 (NDAN…TNDD). Residues 64–186 (IFIHKLYQIL…NPTKIWEFKH (123 aa)) mediate DNA binding. Positions 171 to 181 (QEKEKSNPTKI) are enriched in basic and acidic residues. A compositionally biased stretch (low complexity) spans 208–224 (SRNNSSINSRKNSSNQN). Serine 220 carries the post-translational modification Phosphoserine. Over residues 236–247 (SSIQDPSTSSNS) the composition is skewed to polar residues. Serine 556 is subject to Phosphoserine. Residues 679-699 (AVSSNLINSPMNVEHSSSLSQ) are compositionally biased toward polar residues. Residues 708 to 719 (LPQPSLPTTSTT) are compositionally biased toward low complexity. Serine 733 is subject to Phosphoserine. The segment covering 738–750 (LLNQEDSSTSSAD) has biased composition (polar residues).

The protein in the N-terminal section; belongs to the HSF family.

It localises to the nucleus. Functionally, involved in cell surface assembly and regulation of the gene related to flocculation (asexual cell aggregation). Mutations in SFL1 causes constitutive cell aggregation. The sequence is that of Flocculation suppression protein (SFL1) from Saccharomyces cerevisiae (strain ATCC 204508 / S288c) (Baker's yeast).